A 234-amino-acid polypeptide reads, in one-letter code: Sugar fermentation stimulation protein A (234 aa).

The segment at residues 201–220 (LLSEAQQRGVEILAYKAEIS) is a DNA-binding region (H-T-H motif).

Belongs to the SfsA family.

In terms of biological role, binds to DNA non-specifically. Could be a regulatory factor involved in maltose metabolism. This chain is Sugar fermentation stimulation protein A, found in Shigella sonnei (strain Ss046).